A 28-amino-acid polypeptide reads, in one-letter code: uORF1 protein (28 aa).

The protein localises to the host cytoplasm. The protein resides in the host cytoskeleton. In terms of biological role, plays a role in the reorganization of host microtubules and intermediate filaments to form a cytoskeletal cage that surrounds the viral factories, protecting the site of viral replication. May play a role in viral infection of human cortical neurons. The sequence is that of uORF1 protein from Zika virus (isolate ZIKV/Human/French Polynesia/10087PF/2013) (ZIKV).